The sequence spans 773 residues: Leucine-rich repeat-containing protein let-4 (773 aa).

An N-terminal signal peptide occupies residues 1–20 (MRLLLCLLLFSTLLINSTNA). Residues 21 to 689 (CPGVITQACF…RLEKSFFTTT (669 aa)) lie on the Extracellular side of the membrane. LRR repeat units follow at residues 61–84 (VGLI…FFSG), 85–107 (LFIR…AFAG), 109–132 (NPVL…ALAG), 133–157 (LPNL…IFPN), 159–181 (NKLY…TFQN), 183–206 (KNSI…AIRG), 207–230 (LKQL…NFLN), 231–254 (LPVL…AFLN), 256–278 (PSLR…QFQT), 279–302 (FEQL…SLSG), 303–326 (LKQL…AFTN), 328–349 (SIVV…IISG), 350–373 (LPNL…AFYD), 375–397 (ASLV…TFLA), 399–421 (LNLL…AFNS), and 486–516 (LVQI…AFQQ). Residues 690 to 710 (IIFICVGTAVIVLVVVIAGLC) traverse the membrane as a helical segment. The Cytoplasmic segment spans residues 711 to 773 (ISKHRQLQFE…PGSSYCNYYK (63 aa)).

As to expression, in L1 larvae, expressed in a subset of epithelial cells including epidermal, vulval and rectal cells and the excretory duct and pore. Absent from internal epithelia such as the gut and pharyngeal tubes. Transiently expressed in the excretory canal cell at the 1.5-fold embryonic stage but no longer visible in this cell at hatching.

The protein resides in the apical cell membrane. In terms of biological role, required for apical extracellular matrix organization and epithelial junction maintenance. The protein is Leucine-rich repeat-containing protein let-4 (let-4) of Caenorhabditis elegans.